Reading from the N-terminus, the 420-residue chain is Tyrosine--tRNA ligase (420 aa).

L-tyrosine is bound at residue Tyr-33. The 'HIGH' region signature appears at 38–47; sequence PTADSLHIGH. L-tyrosine-binding residues include Tyr-168 and Gln-172. A 'KMSKS' region motif is present at residues 231 to 235; the sequence is KFGKT. Lys-234 is an ATP binding site. The S4 RNA-binding domain occupies 353-419; the sequence is MLLVDALIKV…GKKNYYLVKL (67 aa).

The protein belongs to the class-I aminoacyl-tRNA synthetase family. TyrS type 1 subfamily. In terms of assembly, homodimer.

The protein resides in the cytoplasm. It carries out the reaction tRNA(Tyr) + L-tyrosine + ATP = L-tyrosyl-tRNA(Tyr) + AMP + diphosphate + H(+). In terms of biological role, catalyzes the attachment of tyrosine to tRNA(Tyr) in a two-step reaction: tyrosine is first activated by ATP to form Tyr-AMP and then transferred to the acceptor end of tRNA(Tyr). The polypeptide is Tyrosine--tRNA ligase (Desulfitobacterium hafniense (strain Y51)).